A 624-amino-acid chain; its full sequence is Protein FAM234B (624 aa).

Residues 1–91 (MATVLSRALK…GFPSEPLGGL (91 aa)) form a disordered region. Ser16 carries the phosphoserine modification. Thr26 bears the Phosphothreonine mark. Ser30, Ser33, and Ser63 each carry phosphoserine. Residues 107-127 (VFLLTLVISMVLVLLCAFLIP) traverse the membrane as a helical segment.

The protein belongs to the FAM234 family.

The protein resides in the membrane. It is found in the golgi outpost. The protein localises to the cytoplasm. It localises to the cytoskeleton. Its subcellular location is the microtubule organizing center. The chain is Protein FAM234B from Mus musculus (Mouse).